Reading from the N-terminus, the 286-residue chain is Ferric acinetobactin reductase (286 aa).

The FAD-binding FR-type domain maps to 25–131 (MEQLEMTIVS…IGPRPHFIPN (107 aa)). FAD is bound by residues R79, V80, T82, D96, V98, H100, D102, S104, A106, R250, G252, and S255.

It belongs to the SIP oxidoreductase family. Monomer in solution. FAD is required as a cofactor.

The catalysed reaction is 2 a Fe(II)-siderophore + NAD(+) + H(+) = 2 a Fe(III)-siderophore + NADH. The enzyme catalyses 2 a Fe(II)-siderophore + NADP(+) + H(+) = 2 a Fe(III)-siderophore + NADPH. Its function is as follows. Ferric-siderophore reductase involved in iron removal from the siderophores after their transport into the cell. Interacts with the siderophores acinetobactin (Acb) and preacinetobactin (pre-Acb) and catalyzes the reduction of the ferric iron bound to the siderophores to ferrous iron, resulting in destabilization of the siderophore chelation complex and entrance of ferrous iron into the intracellular pool of bioavailable metals. Can use NADH and NADPH as electron donors in vitro, but the reduction rate is very slow, suggesting that NADH and NADPH are not the physiological partners of BauF. This chain is Ferric acinetobactin reductase, found in Acinetobacter baumannii.